Consider the following 351-residue polypeptide: UDP-3-O-acylglucosamine N-acyltransferase (351 aa).

His-257 acts as the Proton acceptor in catalysis.

Belongs to the transferase hexapeptide repeat family. LpxD subfamily. As to quaternary structure, homotrimer.

The enzyme catalyses a UDP-3-O-[(3R)-3-hydroxyacyl]-alpha-D-glucosamine + a (3R)-hydroxyacyl-[ACP] = a UDP-2-N,3-O-bis[(3R)-3-hydroxyacyl]-alpha-D-glucosamine + holo-[ACP] + H(+). Its pathway is bacterial outer membrane biogenesis; LPS lipid A biosynthesis. Functionally, catalyzes the N-acylation of UDP-3-O-acylglucosamine using 3-hydroxyacyl-ACP as the acyl donor. Is involved in the biosynthesis of lipid A, a phosphorylated glycolipid that anchors the lipopolysaccharide to the outer membrane of the cell. The chain is UDP-3-O-acylglucosamine N-acyltransferase from Methylorubrum extorquens (strain CM4 / NCIMB 13688) (Methylobacterium extorquens).